Here is a 95-residue protein sequence, read N- to C-terminus: Aspartyl/glutamyl-tRNA(Asn/Gln) amidotransferase subunit C (95 aa).

The protein belongs to the GatC family. As to quaternary structure, heterotrimer of A, B and C subunits.

The catalysed reaction is L-glutamyl-tRNA(Gln) + L-glutamine + ATP + H2O = L-glutaminyl-tRNA(Gln) + L-glutamate + ADP + phosphate + H(+). It catalyses the reaction L-aspartyl-tRNA(Asn) + L-glutamine + ATP + H2O = L-asparaginyl-tRNA(Asn) + L-glutamate + ADP + phosphate + 2 H(+). Its function is as follows. Allows the formation of correctly charged Asn-tRNA(Asn) or Gln-tRNA(Gln) through the transamidation of misacylated Asp-tRNA(Asn) or Glu-tRNA(Gln) in organisms which lack either or both of asparaginyl-tRNA or glutaminyl-tRNA synthetases. The reaction takes place in the presence of glutamine and ATP through an activated phospho-Asp-tRNA(Asn) or phospho-Glu-tRNA(Gln). This is Aspartyl/glutamyl-tRNA(Asn/Gln) amidotransferase subunit C from Geotalea uraniireducens (strain Rf4) (Geobacter uraniireducens).